Here is a 56-residue protein sequence, read N- to C-terminus: UPF0434 protein Ecaj_0131 (56 aa).

The protein belongs to the UPF0434 family.

The protein is UPF0434 protein Ecaj_0131 of Ehrlichia canis (strain Jake).